Consider the following 900-residue polypeptide: 3'-5' exonuclease DinG (900 aa).

Residues 8–161 form the Exonuclease domain; that stretch reads VVDLETTGNQ…DEDAATTAQL (154 aa). In terms of domain architecture, Helicase ATP-binding spans 241 to 496; sequence TLVTKELGLT…KSIDLLEQQR (256 aa). An ATP-binding site is contributed by 276-283; that stretch reads APLGSGKS. The DEAH box motif lies at 448-451; that stretch reads DEAH. The region spanning 714-883 is the Helicase C-terminal domain; it reads YVIEYVSVVE…RYRQKKGDIK (170 aa).

It belongs to the helicase family. DinG subfamily. Type 2 sub-subfamily.

Its function is as follows. 3'-5' exonuclease. The polypeptide is 3'-5' exonuclease DinG (Staphylococcus saprophyticus subsp. saprophyticus (strain ATCC 15305 / DSM 20229 / NCIMB 8711 / NCTC 7292 / S-41)).